Reading from the N-terminus, the 346-residue chain is NADH-ubiquinone oxidoreductase chain 2 (346 aa).

9 helical membrane passes run 7–27, 59–79, 93–115, 151–171, 178–198, 200–220, 242–262, 275–294, and 325–345; these read AIIT…NHWI, YFLT…MNMW, ISCT…HFWF, TTLL…GGLN, IMAF…TLSP, ILLL…LMIN, TMML…GFAP, LSMF…YFYL, and LATI…LKAI.

Belongs to the complex I subunit 2 family.

It is found in the mitochondrion inner membrane. The catalysed reaction is a ubiquinone + NADH + 5 H(+)(in) = a ubiquinol + NAD(+) + 4 H(+)(out). Its function is as follows. Core subunit of the mitochondrial membrane respiratory chain NADH dehydrogenase (Complex I) that is believed to belong to the minimal assembly required for catalysis. Complex I functions in the transfer of electrons from NADH to the respiratory chain. The immediate electron acceptor for the enzyme is believed to be ubiquinone. The sequence is that of NADH-ubiquinone oxidoreductase chain 2 (MT-ND2) from Pelomedusa subrufa (African side-necked turtle).